The following is a 147-amino-acid chain: uncharacterized protein (147 aa).

The helical transmembrane segment at 13 to 35 threads the bilayer; it reads NSRINLLGILVLNVVCGKSSIFF.

Its subcellular location is the membrane. This is an uncharacterized protein from Saccharomyces cerevisiae (strain ATCC 204508 / S288c) (Baker's yeast).